Consider the following 722-residue polypeptide: Probable acyl-activating enzyme 16, chloroplastic (722 aa).

A chloroplast-targeting transit peptide spans M1–R47.

Belongs to the ATP-dependent AMP-binding enzyme family.

It is found in the plastid. Its subcellular location is the chloroplast. Its function is as follows. May be involved in the activation of fatty acids to acyl-carrier-protein. The chain is Probable acyl-activating enzyme 16, chloroplastic (AAE16) from Arabidopsis thaliana (Mouse-ear cress).